The sequence spans 656 residues: Chaperone protein HtpG (656 aa).

The a; substrate-binding stretch occupies residues 1-359 (MSAQVEQLEF…AEDMSLNVSR (359 aa)). The interval 360–575 (EILQQNRQIN…AFGITPALAR (216 aa)) is b. The tract at residues 576–656 (IYRASGQDVP…LLADLLSRSM (81 aa)) is c.

This sequence belongs to the heat shock protein 90 family. In terms of assembly, homodimer.

It localises to the cytoplasm. Its function is as follows. Molecular chaperone. Has ATPase activity. The chain is Chaperone protein HtpG from Mycobacterium leprae (strain TN).